A 504-amino-acid polypeptide reads, in one-letter code: Syntaphilin (504 aa).

A disordered region spans residues 1–74; it reads MAMSLQGSRR…HGIKPPTPEQ (74 aa). Low complexity-rich tracts occupy residues 7–26 and 33–49; these read GSRR…VSVR and SLSS…SDSS. The stretch at 79–161 forms a coiled coil; sequence LQQKEVCIRH…VKNNLIDKDK (83 aa). Residues 191 to 244 are disordered; the sequence is VAKEEGTGESAGGSPARSLTRSSTYTKLSDPAVCGDRQAGDPSNTPAEDRADSG. A phosphoserine mark is found at Ser200 and Ser204. Residues 207-217 are compositionally biased toward polar residues; the sequence is RSLTRSSTYTK. Residue Thr214 is modified to Phosphothreonine. Ser219 is modified (phosphoserine). Thr235 carries the post-translational modification Phosphothreonine. The helical transmembrane segment at 437-456 threads the bilayer; the sequence is YIVDLLAVVVPAVPTVAWLC.

Binds to STX1A. Interacts with DNM1; this interaction inhibits the binding of DNM1 to AMPH and DNM1-receptor-mediated endocytosis.

It is found in the membrane. It localises to the synapse. Its subcellular location is the synaptosome. Inhibits SNARE complex formation by absorbing free STX1A. The protein is Syntaphilin of Rattus norvegicus (Rat).